The sequence spans 396 residues: MANTKVADVVTETLHVAGVKRIYGVVGDSLNGITDSLRRRGDIDWIHVRHEESAAFAAGAEAHLTGELAVCAGSCGPGNLHLINGLFDCHRSRVPVLAIAAHIPSAEIGRGYFQETHPESLFRECSHYCELVSSPEQLPGVLESAIRAAVGLRGVAVVIIPGDVALRESNAKPAAGASMALRPPVVQPAAADVDALAQLLNDSGKVTLLCGRGCAGAHDPLVKLAEALKAPIVHAFGGKEYVEYDNPYDVGMTGLIGFSSGYHAMLNCDTLLMLGTDFPYRQFYPADAKIAQVDVRPENLGRRARLDLGMVGDVSATIGALLPKLKARTDRAYLDACLAHYRKAREGLDELPPASRDASPFTHNTWPSWSARQRRTMRFSRSTWARRRSGPRVISP.

This is an uncharacterized protein from Pseudomonas amyloderamosa.